We begin with the raw amino-acid sequence, 206 residues long: ATP-dependent Clp protease proteolytic subunit 1 (206 aa).

The active-site Nucleophile is Ser100. Residue His125 is part of the active site.

Belongs to the peptidase S14 family. Fourteen ClpP subunits assemble into 2 heptameric rings which stack back to back to give a disk-like structure with a central cavity, resembling the structure of eukaryotic proteasomes.

The protein resides in the cytoplasm. The catalysed reaction is Hydrolysis of proteins to small peptides in the presence of ATP and magnesium. alpha-casein is the usual test substrate. In the absence of ATP, only oligopeptides shorter than five residues are hydrolyzed (such as succinyl-Leu-Tyr-|-NHMec, and Leu-Tyr-Leu-|-Tyr-Trp, in which cleavage of the -Tyr-|-Leu- and -Tyr-|-Trp bonds also occurs).. In terms of biological role, cleaves peptides in various proteins in a process that requires ATP hydrolysis. Has a chymotrypsin-like activity. Plays a major role in the degradation of misfolded proteins. In Myxococcus xanthus (strain DK1622), this protein is ATP-dependent Clp protease proteolytic subunit 1.